Here is a 344-residue protein sequence, read N- to C-terminus: MEFSQLVERLQTHIQCHSLEKFGDRNPTLGGVAALTEALTGQISYVDSAKYAPQMKTTQASALILPPDAKLQAEADAQGIAWCATAQPRLLFAAAIAVFYQPYRPPAGIHATAVIDPSVHCGEDVSIGPHVVIYPNVTLGDRVCIHGNVVIYPGVTIGNDSVLHGNCTIHERTQIGQGCVIHSGAAIGAEGFGFVPTPEGWFKMEQSGQVVLEDGVEIGCNSAVDRPAVGETRIGKNTKLDNMVHVAHGCRIGEACALAGQVGLAGGVTIGNRVILAGQVGVADKSEIGDGAIASAQTGIHGKVGPKEVVCGSPHMPHKLYLKASAIYKRLPEMYDTLKKLKKV.

Histidine 248 (proton acceptor) is an active-site residue.

This sequence belongs to the transferase hexapeptide repeat family. LpxD subfamily. Homotrimer.

It catalyses the reaction a UDP-3-O-[(3R)-3-hydroxyacyl]-alpha-D-glucosamine + a (3R)-hydroxyacyl-[ACP] = a UDP-2-N,3-O-bis[(3R)-3-hydroxyacyl]-alpha-D-glucosamine + holo-[ACP] + H(+). Its pathway is bacterial outer membrane biogenesis; LPS lipid A biosynthesis. Catalyzes the N-acylation of UDP-3-O-acylglucosamine using 3-hydroxyacyl-ACP as the acyl donor. Is involved in the biosynthesis of lipid A, a phosphorylated glycolipid that anchors the lipopolysaccharide to the outer membrane of the cell. This chain is UDP-3-O-acylglucosamine N-acyltransferase, found in Synechocystis sp. (strain ATCC 27184 / PCC 6803 / Kazusa).